Reading from the N-terminus, the 363-residue chain is 3-isopropylmalate dehydrogenase (363 aa).

78–91 (GKKWDDLPINQRPE) lines the NAD(+) pocket. Substrate is bound by residues Arg99, Arg109, Arg138, and Asp227. Asp227, Asp251, and Asp255 together coordinate Mg(2+). Position 285 to 297 (285 to 297 (GSAPDIEGKNIAN)) interacts with NAD(+).

The protein belongs to the isocitrate and isopropylmalate dehydrogenases family. LeuB type 1 subfamily. Homodimer. Mg(2+) is required as a cofactor. Requires Mn(2+) as cofactor.

The protein resides in the cytoplasm. The catalysed reaction is (2R,3S)-3-isopropylmalate + NAD(+) = 4-methyl-2-oxopentanoate + CO2 + NADH. It functions in the pathway amino-acid biosynthesis; L-leucine biosynthesis; L-leucine from 3-methyl-2-oxobutanoate: step 3/4. In terms of biological role, catalyzes the oxidation of 3-carboxy-2-hydroxy-4-methylpentanoate (3-isopropylmalate) to 3-carboxy-4-methyl-2-oxopentanoate. The product decarboxylates to 4-methyl-2 oxopentanoate. This is 3-isopropylmalate dehydrogenase from Buchnera aphidicola subsp. Uroleucon rudbeckiae.